Here is a 190-residue protein sequence, read N- to C-terminus: Elongation factor P-like protein (190 aa).

This sequence belongs to the elongation factor P family.

In Pseudoalteromonas atlantica (strain T6c / ATCC BAA-1087), this protein is Elongation factor P-like protein.